A 229-amino-acid chain; its full sequence is Large ribosomal subunit protein uL1 (229 aa).

This sequence belongs to the universal ribosomal protein uL1 family. As to quaternary structure, part of the 50S ribosomal subunit.

In terms of biological role, binds directly to 23S rRNA. The L1 stalk is quite mobile in the ribosome, and is involved in E site tRNA release. Its function is as follows. Protein L1 is also a translational repressor protein, it controls the translation of the L11 operon by binding to its mRNA. The sequence is that of Large ribosomal subunit protein uL1 from Pediococcus pentosaceus (strain ATCC 25745 / CCUG 21536 / LMG 10740 / 183-1w).